The primary structure comprises 653 residues: Macrolide export ATP-binding/permease protein MacB (653 aa).

The 239-residue stretch at 6 to 244 (LQLTRVTRRF…DAAPDASGGA (239 aa)) folds into the ABC transporter domain. 42–49 (GASGSGKS) serves as a coordination point for ATP. 4 helical membrane passes run 278-298 (LLTMLGIIIGITSVVSIVAIG), 526-546 (LTLLLSLIAVISLVVGGIGVM), 587-607 (MGGAIGIVLSFGMSFVFSLFV), and 616-636 (AASIASAFLCSTLIGVVFGFM).

This sequence belongs to the ABC transporter superfamily. Macrolide exporter (TC 3.A.1.122) family. As to quaternary structure, homodimer.

Its subcellular location is the cell inner membrane. In terms of biological role, non-canonical ABC transporter that contains transmembrane domains (TMD), which form a pore in the inner membrane, and an ATP-binding domain (NBD), which is responsible for energy generation. Confers resistance against macrolides. The protein is Macrolide export ATP-binding/permease protein MacB of Burkholderia pseudomallei (strain 1710b).